Consider the following 409-residue polypeptide: uncharacterized protein (409 aa).

10 helical membrane-spanning segments follow: residues 62–82 (FSLG…WVWI), 100–120 (LLLF…PEAF), 123–143 (MGLL…LFAL), 152–172 (ASFM…TFWI), 183–203 (VVLW…RYWV), 252–272 (GTPW…WIYF), 293–313 (AQYL…FTAV), 328–348 (YNFA…TMWM), 355–375 (VLPY…TLVP), and 376–396 (FVAN…VAVW).

It is found in the cell membrane. This is an uncharacterized protein from Rhizobium meliloti (strain 1021) (Ensifer meliloti).